The following is a 154-amino-acid chain: NAD(P)H-quinone oxidoreductase subunit N (154 aa).

Belongs to the complex I NdhN subunit family. NDH-1 can be composed of about 15 different subunits; different subcomplexes with different compositions have been identified which probably have different functions.

It localises to the cellular thylakoid membrane. The enzyme catalyses a plastoquinone + NADH + (n+1) H(+)(in) = a plastoquinol + NAD(+) + n H(+)(out). The catalysed reaction is a plastoquinone + NADPH + (n+1) H(+)(in) = a plastoquinol + NADP(+) + n H(+)(out). NDH-1 shuttles electrons from an unknown electron donor, via FMN and iron-sulfur (Fe-S) centers, to quinones in the respiratory and/or the photosynthetic chain. The immediate electron acceptor for the enzyme in this species is believed to be plastoquinone. Couples the redox reaction to proton translocation, and thus conserves the redox energy in a proton gradient. Cyanobacterial NDH-1 also plays a role in inorganic carbon-concentration. The chain is NAD(P)H-quinone oxidoreductase subunit N from Prochlorococcus marinus (strain NATL2A).